The following is a 187-amino-acid chain: MPKPTKGPRLGGGPAHERLMLANLAQSLFEHKSIKTTETKAKRLRPVAERLVTFAKRGDLHARRRVMGIIPSKSVVHELFTEIAPLVAERDGGYTRITKLGFRKGDNAPMVQIELVLEPVTPKVRSSRTSTATAPVAAAPVAEAPAEESDVPVEETDAVEHTDETPAETTDAAAAEVEADAAEKSDK.

A disordered region spans residues proline 122–lysine 187. Residues serine 127 to alanine 144 show a composition bias toward low complexity. Residues proline 145–aspartate 157 show a composition bias toward acidic residues. A compositionally biased stretch (low complexity) spans alanine 167 to glutamate 176.

The protein belongs to the bacterial ribosomal protein bL17 family. As to quaternary structure, part of the 50S ribosomal subunit. Contacts protein L32.

This chain is Large ribosomal subunit protein bL17, found in Clavibacter sepedonicus (Clavibacter michiganensis subsp. sepedonicus).